Here is a 245-residue protein sequence, read N- to C-terminus: Uridylate kinase (245 aa).

Lys-12 to Gly-15 lines the ATP pocket. UMP is bound at residue Gly-55. 2 residues coordinate ATP: Gly-56 and Arg-60. Residues Asp-76 and Ala-137–Thr-144 contribute to the UMP site. ATP-binding residues include Thr-164, Tyr-171, and Asp-174.

It belongs to the UMP kinase family. As to quaternary structure, homohexamer.

The protein localises to the cytoplasm. The catalysed reaction is UMP + ATP = UDP + ADP. Its pathway is pyrimidine metabolism; CTP biosynthesis via de novo pathway; UDP from UMP (UMPK route): step 1/1. Inhibited by UTP. In terms of biological role, catalyzes the reversible phosphorylation of UMP to UDP. This chain is Uridylate kinase, found in Chlamydia trachomatis serovar A (strain ATCC VR-571B / DSM 19440 / HAR-13).